A 138-amino-acid chain; its full sequence is Phosphoribosyl-AMP cyclohydrolase (138 aa).

Residue Asp-84 participates in Mg(2+) binding. A Zn(2+)-binding site is contributed by Cys-85. Positions 86 and 88 each coordinate Mg(2+). Residues Cys-102 and Cys-109 each coordinate Zn(2+).

It belongs to the PRA-CH family. As to quaternary structure, homodimer. Mg(2+) serves as cofactor. It depends on Zn(2+) as a cofactor.

The protein localises to the cytoplasm. It catalyses the reaction 1-(5-phospho-beta-D-ribosyl)-5'-AMP + H2O = 1-(5-phospho-beta-D-ribosyl)-5-[(5-phospho-beta-D-ribosylamino)methylideneamino]imidazole-4-carboxamide. The protein operates within amino-acid biosynthesis; L-histidine biosynthesis; L-histidine from 5-phospho-alpha-D-ribose 1-diphosphate: step 3/9. Its function is as follows. Catalyzes the hydrolysis of the adenine ring of phosphoribosyl-AMP. The sequence is that of Phosphoribosyl-AMP cyclohydrolase from Burkholderia lata (strain ATCC 17760 / DSM 23089 / LMG 22485 / NCIMB 9086 / R18194 / 383).